A 35-amino-acid polypeptide reads, in one-letter code: Anti-H(O) lectin 3 (35 aa).

The protein belongs to the leguminous lectin family. As to quaternary structure, homodimer. In terms of processing, highly glycosylated.

Binds lactose or galactose. The chain is Anti-H(O) lectin 3 from Ulex europaeus (Furze).